We begin with the raw amino-acid sequence, 590 residues long: Pentatricopeptide repeat-containing protein At2g46050, mitochondrial (590 aa).

The N-terminal 109 residues, 1-109 (MRFTFLRSTR…RNIVTWNILI (109 aa)), are a transit peptide targeting the mitochondrion. 11 PPR repeats span residues 141–175 (DHVS…GLES), 176–206 (SCFP…VLDR), 207–241 (DLVL…KNRF), 244–266 (DYFT…IHAI), 275–305 (DIPV…MVVR), 306–340 (NVVS…NLQP), 341–375 (DELT…GSAD), 376–406 (FLSV…IREP), 407–437 (DLVS…MLQK), 441–471 (DKIT…MTEF), and 477–507 (EDEH…MPTE). Positions 512-588 (ALAAFTGGCN…TPGCSWLGDY (77 aa)) are type E motif.

The protein belongs to the PPR family. PCMP-E subfamily.

It is found in the mitochondrion. This Arabidopsis thaliana (Mouse-ear cress) protein is Pentatricopeptide repeat-containing protein At2g46050, mitochondrial (PCMP-E39).